We begin with the raw amino-acid sequence, 738 residues long: 1,4-alpha-glucan branching enzyme GlgB (738 aa).

Asp-417 serves as the catalytic Nucleophile. The Proton donor role is filled by Glu-472.

The protein belongs to the glycosyl hydrolase 13 family. GlgB subfamily. As to quaternary structure, monomer.

The enzyme catalyses Transfers a segment of a (1-&gt;4)-alpha-D-glucan chain to a primary hydroxy group in a similar glucan chain.. The protein operates within glycan biosynthesis; glycogen biosynthesis. In terms of biological role, catalyzes the formation of the alpha-1,6-glucosidic linkages in glycogen by scission of a 1,4-alpha-linked oligosaccharide from growing alpha-1,4-glucan chains and the subsequent attachment of the oligosaccharide to the alpha-1,6 position. The polypeptide is 1,4-alpha-glucan branching enzyme GlgB (Burkholderia pseudomallei (strain 1106a)).